A 660-amino-acid polypeptide reads, in one-letter code: Poly(A)-specific ribonuclease PARN (660 aa).

A divalent metal cation contacts are provided by D28 and E30. Residues R177–D243 enclose the R3H domain. A divalent metal cation contacts are provided by D290 and D380. 2 positions are modified to phosphoserine: S560 and S614. The segment at A606–W660 is disordered. Residues K633–K642 are compositionally biased toward basic residues. A Phosphoserine modification is found at S643. Residue T649 is modified to Phosphothreonine.

This sequence belongs to the CAF1 family. A divalent metal cation serves as cofactor.

It is found in the cytoplasm. It localises to the nucleus. It carries out the reaction Exonucleolytic cleavage of poly(A) to 5'-AMP.. 3'-exoribonuclease that has a preference for poly(A) tails of mRNAs, thereby efficiently degrading poly(A) tails. Exonucleolytic degradation of the poly(A) tail is often the first step in the decay of eukaryotic mRNAs and is also used to silence certain maternal mRNAs translationally during oocyte maturation and early embryonic development. The polypeptide is Poly(A)-specific ribonuclease PARN (parn) (Danio rerio (Zebrafish)).